Reading from the N-terminus, the 345-residue chain is NADPH-dependent curcumin reductase (345 aa).

The segment covering 1 to 10 (MGQQKQRNRR) has biased composition (basic residues). Residues 1-24 (MGQQKQRNRRWVLASRPHGAPVPE) form a disordered region. Positions 186, 225, and 333 each coordinate NADP(+).

As to quaternary structure, homodimer.

The enzyme catalyses tetrahydrocurcumin + 2 NADP(+) = curcumin + 2 NADPH + 2 H(+). The catalysed reaction is tetrahydrocurcumin + NADP(+) = dihydrocurcumin + NADPH + H(+). It catalyses the reaction dihydrocurcumin + NADP(+) = curcumin + NADPH + H(+). Its activity is regulated as follows. Inhibited by thiol-specific reagents (p-chloromercuribenzoate and 5,5'-dithio-bis-2-nitrobenzoate). Its function is as follows. Catalyzes the metal-independent reduction of curcumin to dihydrocurcumin (DHC) as an intermediate product, followed by further reduction to tetrahydrocurcumin (THC) as an end product. It also acts on 3-octene-2-one, 3-hepten-2-one, resveratrol, and trans-2-octenal. The sequence is that of NADPH-dependent curcumin reductase from Escherichia coli (strain K12).